We begin with the raw amino-acid sequence, 176 residues long: Probable inosine/xanthosine triphosphatase (176 aa).

Residue aspartate 36 participates in Mg(2+) binding.

Belongs to the YjjX NTPase family. In terms of assembly, homodimer. Requires Mg(2+) as cofactor. Mn(2+) is required as a cofactor.

It catalyses the reaction XTP + H2O = XDP + phosphate + H(+). It carries out the reaction ITP + H2O = IDP + phosphate + H(+). Phosphatase that hydrolyzes non-canonical purine nucleotides such as XTP and ITP to their respective diphosphate derivatives. Probably excludes non-canonical purines from DNA/RNA precursor pool, thus preventing their incorporation into DNA/RNA and avoiding chromosomal lesions. This chain is Probable inosine/xanthosine triphosphatase, found in Saccharolobus islandicus (strain Y.G.57.14 / Yellowstone #1) (Sulfolobus islandicus).